The chain runs to 285 residues: Probable endonuclease 4 (285 aa).

9 residues coordinate Zn(2+): His69, His109, Glu145, Asp179, His182, His216, Asp229, His231, and Glu261.

This sequence belongs to the AP endonuclease 2 family. It depends on Zn(2+) as a cofactor.

It catalyses the reaction Endonucleolytic cleavage to 5'-phosphooligonucleotide end-products.. In terms of biological role, endonuclease IV plays a role in DNA repair. It cleaves phosphodiester bonds at apurinic or apyrimidinic (AP) sites, generating a 3'-hydroxyl group and a 5'-terminal sugar phosphate. The chain is Probable endonuclease 4 from Salmonella newport (strain SL254).